Here is a 317-residue protein sequence, read N- to C-terminus: NAD-dependent protein deacetylase Sirt6 (317 aa).

Residues 27–273 (DEVVAEKCQE…SKVCKLLGVE (247 aa)) enclose the Deacetylase sirtuin-type domain. NAD(+)-binding residues include Ala-53, Thr-57, Phe-64, Arg-65, Trp-71, Gln-113, and His-133. The Proton acceptor role is filled by His-133. Cys-141, Cys-144, Cys-166, and Cys-177 together coordinate Zn(2+). 4 residues coordinate NAD(+): Gly-215, Asn-241, Gln-243, and Val-259.

Belongs to the sirtuin family. Class IV subfamily. Zn(2+) is required as a cofactor. As to expression, widely expressed.

The protein resides in the nucleus. Its subcellular location is the chromosome. It catalyses the reaction N(6)-acetyl-L-lysyl-[protein] + NAD(+) + H2O = 2''-O-acetyl-ADP-D-ribose + nicotinamide + L-lysyl-[protein]. Functionally, NAD-dependent histone deacylase that acts as a regulator of life span. The chain is NAD-dependent protein deacetylase Sirt6 from Drosophila melanogaster (Fruit fly).